Here is a 175-residue protein sequence, read N- to C-terminus: MMTYIVFILSIVFVMSFVGFATKPSPIYGGLVLIISGGIGCAIVLNFGGSFLGLMVFLIYLGGMLVVFGYTTAMATEQYPEVWVSNKAVLAAFITGLLSELLTACYILKDDEVEVVLKFNGMGDWVIYDTGDSGFFSEEAMGIAALYSYGTWLVVVTGWSLLIGVLVIMEVTRGN.

The next 5 membrane-spanning stretches (helical) occupy residues 1-21, 25-45, 47-67, 88-108, and 149-169; these read MMTY…VGFA, SPIY…AIVL, FGGS…MLVV, AVLA…CYIL, and YGTW…LVIM.

It belongs to the complex I subunit 6 family. As to quaternary structure, core subunit of respiratory chain NADH dehydrogenase (Complex I) which is composed of 45 different subunits.

It is found in the mitochondrion inner membrane. It carries out the reaction a ubiquinone + NADH + 5 H(+)(in) = a ubiquinol + NAD(+) + 4 H(+)(out). In terms of biological role, core subunit of the mitochondrial membrane respiratory chain NADH dehydrogenase (Complex I) which catalyzes electron transfer from NADH through the respiratory chain, using ubiquinone as an electron acceptor. Essential for the catalytic activity and assembly of complex I. The protein is NADH-ubiquinone oxidoreductase chain 6 (MT-ND6) of Canis lupus familiaris (Dog).